The sequence spans 143 residues: Ribonuclease HI (143 aa).

The RNase H type-1 domain occupies 1 to 136; sequence MQEIEIFCDG…CNSLAKLEAQ (136 aa). The Mg(2+) site is built by aspartate 9, glutamate 47, aspartate 69, and asparagine 128.

The protein belongs to the RNase H family. As to quaternary structure, monomer. It depends on Mg(2+) as a cofactor.

The protein localises to the cytoplasm. The catalysed reaction is Endonucleolytic cleavage to 5'-phosphomonoester.. Endonuclease that specifically degrades the RNA of RNA-DNA hybrids. The protein is Ribonuclease HI (rnhA) of Helicobacter pylori (strain J99 / ATCC 700824) (Campylobacter pylori J99).